We begin with the raw amino-acid sequence, 177 residues long: 2''-aminoglycoside nucleotidyltransferase (177 aa).

Residues 1-92 (MDTTQVTLIH…ELLDCEPAWW (92 aa)) are N-terminal domain. The Mg(2+) site is built by aspartate 44, aspartate 46, and aspartate 86. The active-site Proton acceptor is aspartate 86. The interval 93–177 (ADEAYEIAEA…RAAFRSRYAA (85 aa)) is C-terminal domain. Residue alanine 100 participates in kanamycin A binding.

In terms of assembly, monomer. It depends on Mg(2+) as a cofactor.

It catalyses the reaction nucleoside triphosphate + gentamicin = diphosphate + 2''-nucleotidylgentamicin.. Mediates bacterial resistance to kanamycin, gentamicin, dibekacin, sisomicin and tobramycin by adenylating the 2''-hydroxyl group of these antibiotics. This is 2''-aminoglycoside nucleotidyltransferase from Klebsiella pneumoniae.